The chain runs to 241 residues: tRNA pseudouridine synthase A (241 aa).

The active-site Nucleophile is the aspartate 52. Position 111 (tyrosine 111) interacts with substrate.

Belongs to the tRNA pseudouridine synthase TruA family. As to quaternary structure, homodimer.

It carries out the reaction uridine(38/39/40) in tRNA = pseudouridine(38/39/40) in tRNA. Its function is as follows. Formation of pseudouridine at positions 38, 39 and 40 in the anticodon stem and loop of transfer RNAs. This chain is tRNA pseudouridine synthase A, found in Ureaplasma parvum serovar 3 (strain ATCC 27815 / 27 / NCTC 11736).